We begin with the raw amino-acid sequence, 413 residues long: Peptidase T (413 aa).

His-81 is a binding site for Zn(2+). Residue Asp-83 is part of the active site. Zn(2+) is bound at residue Asp-143. Residue Glu-178 is the Proton acceptor of the active site. Positions 179, 201, and 383 each coordinate Zn(2+).

It belongs to the peptidase M20B family. The cofactor is Zn(2+).

The protein localises to the cytoplasm. It carries out the reaction Release of the N-terminal residue from a tripeptide.. In terms of biological role, cleaves the N-terminal amino acid of tripeptides. The protein is Peptidase T of Lactococcus lactis subsp. cremoris (Streptococcus cremoris).